The following is a 169-amino-acid chain: Centrin-1 (169 aa).

Positions 1–21 are essential for homooligomerization; sequence MHSRKGASSLPRGRGAGKKTE. The tract at residues 1–25 is disordered; the sequence is MHSRKGASSLPRGRGAGKKTELTEE. EF-hand domains are found at residues 25–60, 61–96, 98–133, and 134–169; these read EQRQEIKEAFDLFDTDGSGCIDAKELKVAMRALGFE, PKKEEIRKMIADVDKDGTGSVDFQEFLSLMTVKMAE, DPREEILKAFRLFDDDETGKISFKNLKRVSKELGEN, and LTDEELQEMIDEADRDGDGEINEEEFIRIMRKTNLF. Ca(2+) contacts are provided by aspartate 38, aspartate 40, serine 42, cysteine 44, glutamate 49, aspartate 74, aspartate 76, threonine 78, serine 80, and glutamate 85.

It belongs to the centrin family. As to quaternary structure, monomer. Homooligomerizes in a Ca(2+)-dependent manner. Interaction via the C-terminus with other proteins disrupts and/or prevents homooligomerization. Interacts with SFI1.

It localises to the cytoplasm. It is found in the cytoskeleton. The protein resides in the microtubule organizing center. The protein localises to the centrosome. In terms of biological role, acts as a calcium sensor. Part of the centrosome outer core complex. In Toxoplasma gondii (strain ATCC 50611 / Me49), this protein is Centrin-1.